Consider the following 442-residue polypeptide: 3-isopropylmalate dehydratase large subunit (442 aa).

[4Fe-4S] cluster contacts are provided by Xaa347, Cys407, and Cys410.

Belongs to the aconitase/IPM isomerase family. LeuC type 1 subfamily. In terms of assembly, heterodimer of LeuC and LeuD. It depends on [4Fe-4S] cluster as a cofactor.

It carries out the reaction (2R,3S)-3-isopropylmalate = (2S)-2-isopropylmalate. It participates in amino-acid biosynthesis; L-leucine biosynthesis; L-leucine from 3-methyl-2-oxobutanoate: step 2/4. Functionally, catalyzes the isomerization between 2-isopropylmalate and 3-isopropylmalate, via the formation of 2-isopropylmaleate. This chain is 3-isopropylmalate dehydratase large subunit, found in Buchnera aphidicola subsp. Macrosiphoniella ludovicianae.